Reading from the N-terminus, the 397-residue chain is MNNEYVLVINSGSSSLKFAVIDSVSGDAVLSGLGECFGLEDARMSWKYQGQKTEIAIEGNENHHKIAIGKLVGLTEELGFTDGIVAIGHRIVHGGEKFTKTVRINEEVTKEIESLSDLAPLHNPAGAIGIRAAVEAFPSLPQFAVFDTAFHQTMPKRAYTGAIAKELYTDFGVRRYGFHGTSHYFVSREAAKMINKPIEESNFISVHLGNGASVCAIKDGNSVDTSMGFTPLSGLMMGTRCGDLDPGIIEYLLKKGWSQEQVFNSLNKESGFLGVSGLTSDARGILEAMEEGHEGATLAFQVFTYRVAKYVASYLAALDSLDGIIFTGGIGENSLPIRREILSNLKILGFVEDVAGNEGARFGADGIIAKSEMLNAVAMVIPTNEEFVIAQQSVELL.

A Mg(2+)-binding site is contributed by asparagine 10. Lysine 17 contributes to the ATP binding site. Residue arginine 90 coordinates substrate. The Proton donor/acceptor role is filled by aspartate 147. ATP is bound by residues 207–211 (HLGNG), 281–283 (DAR), and 329–333 (GIGEN). Glutamate 385 contributes to the Mg(2+) binding site.

This sequence belongs to the acetokinase family. In terms of assembly, homodimer. Mg(2+) serves as cofactor. Requires Mn(2+) as cofactor.

The protein resides in the cytoplasm. It catalyses the reaction acetate + ATP = acetyl phosphate + ADP. It participates in metabolic intermediate biosynthesis; acetyl-CoA biosynthesis; acetyl-CoA from acetate: step 1/2. Catalyzes the formation of acetyl phosphate from acetate and ATP. Can also catalyze the reverse reaction. The sequence is that of Acetate kinase 2 from Aliivibrio fischeri (strain ATCC 700601 / ES114) (Vibrio fischeri).